Here is a 302-residue protein sequence, read N- to C-terminus: Taste receptor type 2 member 104 (302 aa).

At 1–7 (MLSMLES) the chain is on the extracellular side. The chain crosses the membrane as a helical span at residues 8 to 28 (ILLSVATSEAMLGILGNIFIV). The Cytoplasmic segment spans residues 29 to 43 (LVNCTNWVRNKKLSK). The helical transmembrane segment at 44-64 (INFILTGLAISRVFTIWIITL) threads the bilayer. Over 65–87 (DAYTKVFFLTTLMPSNLHECISY) the chain is Extracellular. The chain crosses the membrane as a helical span at residues 88 to 108 (IWVIINHLSVWFATSLSIFYF). At 109-128 (LKIANFSHYIFLWLKRRADK) the chain is on the cytoplasmic side. The chain crosses the membrane as a helical span at residues 129–149 (VFVFLIGYLIITWLASFPLAV). Topologically, residues 150–182 (TVIKNIKVHHNNTSWLIQLEKRELLINYVFANM) are extracellular. 2 N-linked (GlcNAc...) asparagine glycosylation sites follow: N160 and N161. A helical membrane pass occupies residues 183–203 (GPISLFMVAVFTCFLLTISLW). Residues 204–233 (RHRRRMQSTGSKFRDLNTEVHVKAMKVLIS) lie on the Cytoplasmic side of the membrane. The helical transmembrane segment at 234–254 (FIILFILYFMGVLIETLCLFL) threads the bilayer. Residues 255–257 (TEN) are Extracellular-facing. The helical transmembrane segment at 258 to 278 (ILLFIFGFTLSSTYPCCHSFI) threads the bilayer. The Cytoplasmic portion of the chain corresponds to 279–302 (LILTSRELKQASMRALQRLKCCET).

This sequence belongs to the G-protein coupled receptor T2R family.

The protein localises to the membrane. Its function is as follows. Putative taste receptor which may play a role in the perception of bitterness. The sequence is that of Taste receptor type 2 member 104 from Rattus norvegicus (Rat).